The primary structure comprises 398 residues: Acetate kinase (398 aa).

N7 lines the Mg(2+) pocket. K14 is a binding site for ATP. Residue R91 participates in substrate binding. Residue D148 is the Proton donor/acceptor of the active site. ATP-binding positions include 208–212, 283–285, and 331–335; these read HIGNG, DMR, and GVGEN. Mg(2+) is bound at residue E384.

It belongs to the acetokinase family. In terms of assembly, homodimer. Requires Mg(2+) as cofactor. The cofactor is Mn(2+).

It is found in the cytoplasm. The enzyme catalyses acetate + ATP = acetyl phosphate + ADP. It participates in metabolic intermediate biosynthesis; acetyl-CoA biosynthesis; acetyl-CoA from acetate: step 1/2. In terms of biological role, catalyzes the formation of acetyl phosphate from acetate and ATP. Can also catalyze the reverse reaction. The chain is Acetate kinase from Bacteroides fragilis (strain ATCC 25285 / DSM 2151 / CCUG 4856 / JCM 11019 / LMG 10263 / NCTC 9343 / Onslow / VPI 2553 / EN-2).